The sequence spans 100 residues: Small ribosomal subunit protein uS14c (100 aa).

This sequence belongs to the universal ribosomal protein uS14 family. In terms of assembly, part of the 30S ribosomal subunit.

It localises to the plastid. It is found in the chloroplast. Its function is as follows. Binds 16S rRNA, required for the assembly of 30S particles. This chain is Small ribosomal subunit protein uS14c, found in Nephroselmis olivacea (Green alga).